The chain runs to 324 residues: Acetyl-coenzyme A carboxylase carboxyl transferase subunit alpha (324 aa).

The CoA carboxyltransferase C-terminal domain occupies lysine 37–lysine 291.

This sequence belongs to the AccA family. As to quaternary structure, acetyl-CoA carboxylase is a heterohexamer composed of biotin carboxyl carrier protein (AccB), biotin carboxylase (AccC) and two subunits each of ACCase subunit alpha (AccA) and ACCase subunit beta (AccD).

The protein localises to the cytoplasm. The enzyme catalyses N(6)-carboxybiotinyl-L-lysyl-[protein] + acetyl-CoA = N(6)-biotinyl-L-lysyl-[protein] + malonyl-CoA. It participates in lipid metabolism; malonyl-CoA biosynthesis; malonyl-CoA from acetyl-CoA: step 1/1. Functionally, component of the acetyl coenzyme A carboxylase (ACC) complex. First, biotin carboxylase catalyzes the carboxylation of biotin on its carrier protein (BCCP) and then the CO(2) group is transferred by the carboxyltransferase to acetyl-CoA to form malonyl-CoA. This chain is Acetyl-coenzyme A carboxylase carboxyl transferase subunit alpha, found in Chlamydia trachomatis serovar L2 (strain ATCC VR-902B / DSM 19102 / 434/Bu).